A 421-amino-acid polypeptide reads, in one-letter code: E3 ubiquitin-protein ligase MARCHF4 (421 aa).

The first 16 residues, 1–16, serve as a signal peptide directing secretion; the sequence is MLLAIGVIVWCWGLLS. Residues 60 to 79 are disordered; the sequence is ELNAEGNATSSATESHSLAN. Over residues 65 to 77 the composition is skewed to polar residues; it reads GNATSSATESHSL. The RING-CH-type zinc finger occupies 135 to 195; the sequence is DSGVRTPLCR…ELCYYKYQVI (61 aa). Residues Cys143, Cys146, Cys159, Cys161, His169, Cys172, Cys185, and Cys188 each contribute to the Zn(2+) site. 2 consecutive transmembrane segments (helical) span residues 218-238 and 252-272; these read IAAA…LVWS and LFQI…ALIV. 2 disordered regions span residues 319–385 and 401–421; these read PLTH…LPDH and QEPR…VTTV. Polar residues-rich tracts occupy residues 367–380 and 403–412; these read TEPQ…NGQP and PRGQTSNSNR.

The protein localises to the golgi apparatus membrane. The enzyme catalyses S-ubiquitinyl-[E2 ubiquitin-conjugating enzyme]-L-cysteine + [acceptor protein]-L-lysine = [E2 ubiquitin-conjugating enzyme]-L-cysteine + N(6)-ubiquitinyl-[acceptor protein]-L-lysine.. The protein operates within protein modification; protein ubiquitination. Its function is as follows. E3 ubiquitin-protein ligase. E3 ubiquitin ligases accept ubiquitin from an E2 ubiquitin-conjugating enzyme in the form of a thioester and then directly transfer the ubiquitin to targeted substrates. This Danio rerio (Zebrafish) protein is E3 ubiquitin-protein ligase MARCHF4 (marchf4).